A 1752-amino-acid chain; its full sequence is DNA-directed RNA polymerase II subunit rpb1 (1752 aa).

Positions 69, 72, 79, 82, 109, 112, 150, and 175 each coordinate Zn(2+). Residues D487, D489, and D491 each contribute to the Mg(2+) site. The bridging helix stretch occupies residues 816 to 828; that stretch reads PQEFFFHAMAGRE. K1252 is covalently cross-linked (Glycyl lysine isopeptide (Lys-Gly) (interchain with G-Cter in ubiquitin)). Phosphoserine is present on residues S1489, S1499, S1506, and S1529. A Phosphotyrosine modification is found at Y1531. A disordered region spans residues 1554-1752; it reads TSPSYSPSSP…SPSYSPTSPS (199 aa). A run of 5 repeats spans residues 1558–1564, 1578–1584, 1585–1591, 1592–1598, and 1599–1605. The C-terminal domain (CTD); 26 X 7 AA approximate tandem repeats of Y-S-P-[TS]-S-P-S stretch occupies residues 1558 to 1752; sequence YSPSSPGYST…SPSYSPTSPS (195 aa). Residues 1606–1612 form a 6; approximate repeat; that stretch reads YSATSPS. A run of 20 repeats spans residues 1613 to 1619, 1620 to 1626, 1627 to 1633, 1634 to 1640, 1641 to 1647, 1648 to 1654, 1655 to 1661, 1662 to 1668, 1669 to 1675, 1676 to 1682, 1683 to 1689, 1690 to 1696, 1697 to 1703, 1704 to 1710, 1711 to 1717, 1718 to 1724, 1725 to 1731, 1732 to 1738, 1739 to 1745, and 1746 to 1752.

Belongs to the RNA polymerase beta' chain family. Component of the RNA polymerase II (Pol II) complex consisting of 12 subunits. In terms of processing, the tandem 7 residues repeats in the C-terminal domain (CTD) can be highly phosphorylated. The phosphorylation activates Pol II. Phosphorylation occurs mainly at residues 'Ser-2' and 'Ser-5' of the heptapeptide repeat. The phosphorylation state is believed to result from the balanced action of site-specific CTD kinases and phosphatase, and a 'CTD code' that specifies the position of Pol II within the transcription cycle has been proposed. Post-translationally, following transcription stress, the elongating form of RNA polymerase II (RNA pol IIo) is polyubiquitinated via 'Lys-63'-linkages on Lys-1252 at DNA damage sites without leading to degradation: ubiquitination promotes RNA pol IIo backtracking to allow access by the transcription-coupled nucleotide excision repair (TC-NER) machinery. Subsequent def1-dependent polyubiquitination by the elongin complex via 'Lys-48'-linkages may lead to proteasome-mediated degradation; presumably at stalled RNA pol II where TC-NER has failed, to halt global transcription and enable 'last resort' DNA repair pathways.

It is found in the nucleus. The catalysed reaction is RNA(n) + a ribonucleoside 5'-triphosphate = RNA(n+1) + diphosphate. Functionally, DNA-dependent RNA polymerase catalyzes the transcription of DNA into RNA using the four ribonucleoside triphosphates as substrates. Largest and catalytic component of RNA polymerase II which synthesizes mRNA precursors and many functional non-coding RNAs. Forms the polymerase active center together with the second largest subunit. Pol II is the central component of the basal RNA polymerase II transcription machinery. It is composed of mobile elements that move relative to each other. RPB1 is part of the core element with the central large cleft, the clamp element that moves to open and close the cleft and the jaws that are thought to grab the incoming DNA template. At the start of transcription, a single-stranded DNA template strand of the promoter is positioned within the central active site cleft of Pol II. A bridging helix emanates from RPB1 and crosses the cleft near the catalytic site and is thought to promote translocation of Pol II by acting as a ratchet that moves the RNA-DNA hybrid through the active site by switching from straight to bent conformations at each step of nucleotide addition. During transcription elongation, Pol II moves on the template as the transcript elongates. Elongation is influenced by the phosphorylation status of the C-terminal domain (CTD) of Pol II largest subunit (RPB1), which serves as a platform for assembly of factors that regulate transcription initiation, elongation, termination and mRNA processing. The sequence is that of DNA-directed RNA polymerase II subunit rpb1 (rpb1) from Schizosaccharomyces pombe (strain 972 / ATCC 24843) (Fission yeast).